The sequence spans 180 residues: Protein NEQ441 (180 aa).

The region spanning 1–180 is the AMMECR1 domain; it reads MNLAKIARKI…VFEGQIFEED (180 aa).

The polypeptide is Protein NEQ441 (Nanoarchaeum equitans (strain Kin4-M)).